A 624-amino-acid chain; its full sequence is Actin-related protein 8 (624 aa).

At methionine 1 the chain carries N-acetylmethionine. The segment covering 1–25 (MTQAEKGDAENGKEKGGEKEKEQRG) has biased composition (basic and acidic residues). Positions 1 to 29 (MTQAEKGDAENGKEKGGEKEKEQRGVKRP) are disordered. Residues serine 55 and threonine 56 each coordinate ATP. Position 132 is a phosphoserine (serine 132). 283 to 286 (DVGD) is a binding site for ATP. The residue at position 412 (serine 412) is a Phosphoserine. A disordered region spans residues 430 to 460 (SKQEQSAKATADRKSASKPIGFEGDLRGQSS).

Belongs to the actin family. ARP8 subfamily. In terms of assembly, component of the chromatin remodeling INO80 complex; specifically part of a complex module associated with the DBINO domain of INO80. Exists as monomers and dimers, but the dimer is most probably the biologically relevant form required for stable interactions with histones that exploits the twofold symmetry of the nucleosome core.

The protein resides in the nucleus. It localises to the chromosome. Functionally, plays an important role in the functional organization of mitotic chromosomes. Exhibits low basal ATPase activity, and unable to polymerize. In terms of biological role, proposed core component of the chromatin remodeling INO80 complex which is involved in transcriptional regulation, DNA replication and probably DNA repair. Required for the recruitment of INO80 (and probably the INO80 complex) to sites of DNA damage Strongly prefer nucleosomes and H3-H4 tetramers over H2A-H2B dimers, suggesting it may act as a nucleosome recognition module within the complex. This is Actin-related protein 8 (ACTR8) from Ailuropoda melanoleuca (Giant panda).